A 144-amino-acid polypeptide reads, in one-letter code: Large ribosomal subunit protein uL15 (144 aa).

The interval 1–49 (MRLNTLSPAAGSKSAPKRVGRGIGSGLGKTAGRGHKGQKSRSGGGVRVG) is disordered. Residues 21-31 (RGIGSGLGKTA) show a composition bias toward gly residues.

The protein belongs to the universal ribosomal protein uL15 family. As to quaternary structure, part of the 50S ribosomal subunit.

Its function is as follows. Binds to the 23S rRNA. The chain is Large ribosomal subunit protein uL15 from Shewanella frigidimarina (strain NCIMB 400).